The chain runs to 445 residues: UPF0210 protein SZO_15840 (445 aa).

It belongs to the UPF0210 family. As to quaternary structure, homodimer.

In Streptococcus equi subsp. zooepidemicus (strain H70), this protein is UPF0210 protein SZO_15840.